The chain runs to 208 residues: MTRFIMLSFVTGYRKSISCNRFSRNVVSPYFFMRTIIMTRFERNFLINSLMFLETILSVDKKLDDAIHHFTQGQYENPRYQINSRITNADDWSKEDKLKFTSAIAEAIALVSEKYENPTSETTEQIQSARNILLDNYVPLLTANTDPENRLKSVRENSSQIRKELIAKLKDEVPYKSQFENPYVLFPFVAATVAVAATAASVLFGNKP.

Positions 77–80 (NPRY) match the NPxY eukaryotic motif motif. The chain crosses the membrane as a helical span at residues 184–204 (VLFPFVAATVAVAATAASVLF).

In terms of assembly, homotrimer.

Its subcellular location is the secreted. The protein localises to the host vacuole. It localises to the host pathogen-containing vacuole. The protein resides in the host pathogen-containing vacuole membrane. Its function is as follows. Virulence effector that is indispensable for endoplasmic reticulum (ER)-mediated remodeling of the Legionella pneumophila-containing vacuole (LCV) and lysosomal evasion. Essential for intracellular replication in human monocyte-derived macrophages (hMDMs) and amoebae, as well as for intrapulmonary proliferation in mice. The polypeptide is Effector protein MavE (Legionella pneumophila subsp. pneumophila (strain Philadelphia 1 / ATCC 33152 / DSM 7513)).